The chain runs to 259 residues: Type III pantothenate kinase (259 aa).

ATP is bound at residue 6–13 (DVGNTNIV). Substrate contacts are provided by residues Tyr100 and 107–110 (GADR). The active-site Proton acceptor is the Asp109. Asp129 lines the K(+) pocket. ATP is bound at residue Thr132. Thr184 provides a ligand contact to substrate.

Belongs to the type III pantothenate kinase family. Homodimer. It depends on NH4(+) as a cofactor. K(+) serves as cofactor.

It localises to the cytoplasm. It carries out the reaction (R)-pantothenate + ATP = (R)-4'-phosphopantothenate + ADP + H(+). It functions in the pathway cofactor biosynthesis; coenzyme A biosynthesis; CoA from (R)-pantothenate: step 1/5. Catalyzes the phosphorylation of pantothenate (Pan), the first step in CoA biosynthesis. This is Type III pantothenate kinase from Clostridium perfringens (strain 13 / Type A).